The primary structure comprises 1010 residues: Translation initiation factor IF-2 (1010 aa).

2 disordered regions span residues 54-350 and 364-420; these read KGLA…FEDD and PSFT…RPES. Over residues 57–70 the composition is skewed to polar residues; sequence ASSTSKNSTGQRES. Residues 112–124 show a composition bias toward pro residues; it reads ISPPRPPVKPLVA. Residues 145-155 show a composition bias toward polar residues; the sequence is HSPSVKETPTE. A compositionally biased stretch (basic and acidic residues) spans 200 to 258; it reads DRPRGEKRERGESENAPSPERRVGLAKPEKPTLNRKPDGKSPKLAEPAREVRETVELKR. The segment covering 378-389 has biased composition (low complexity); it reads TAKAAPPGTPTA. A compositionally biased stretch (basic and acidic residues) spans 406 to 419; that stretch reads KSERQEPQEEKRPE. In terms of domain architecture, tr-type G spans 502-675; that stretch reads RRPPVVTIMG…LLVAEVEELV (174 aa). Residues 511 to 518 are G1; sequence GHVDHGKT. 511–518 provides a ligand contact to GTP; sequence GHVDHGKT. The G2 stretch occupies residues 536-540; it reads GITQH. The G3 stretch occupies residues 561-564; the sequence is DTPG. GTP contacts are provided by residues 561-565 and 615-618; these read DTPGH and NKVD. The interval 615–618 is G4; the sequence is NKVD. Residues 651–653 form a G5 region; that stretch reads SAL.

This sequence belongs to the TRAFAC class translation factor GTPase superfamily. Classic translation factor GTPase family. IF-2 subfamily.

It is found in the cytoplasm. Functionally, one of the essential components for the initiation of protein synthesis. Protects formylmethionyl-tRNA from spontaneous hydrolysis and promotes its binding to the 30S ribosomal subunits. Also involved in the hydrolysis of GTP during the formation of the 70S ribosomal complex. This Microcystis aeruginosa (strain NIES-843 / IAM M-2473) protein is Translation initiation factor IF-2.